The primary structure comprises 397 residues: uncharacterized protein (397 aa).

Transmembrane regions (helical) follow at residues 22-42 (ILTM…VAVG), 270-290 (IMTT…GIGV), 327-347 (VVLT…GAAL), and 362-382 (VVCG…MLPA).

Belongs to the ABC-4 integral membrane protein family. In terms of assembly, part of a complex composed of YknX, YknY and YknZ. The complex interacts with YknW.

It is found in the cell membrane. It localises to the membrane raft. Its function is as follows. Part of an unusual four-component transporter, which is required for protection against the killing factor SdpC (sporulation-delaying protein). This is an uncharacterized protein from Bacillus subtilis (strain 168).